The primary structure comprises 150 residues: UPF0208 membrane protein VV1_2222 (150 aa).

The next 2 helical transmembrane spans lie at 42 to 62 (FGIK…MAFN) and 70 to 90 (AIVM…WLGH).

Belongs to the UPF0208 family.

Its subcellular location is the cell inner membrane. This Vibrio vulnificus (strain CMCP6) protein is UPF0208 membrane protein VV1_2222.